Reading from the N-terminus, the 293-residue chain is 4-hydroxy-tetrahydrodipicolinate synthase (293 aa).

Residue Ser-45 participates in pyruvate binding. The active-site Proton donor/acceptor is the Tyr-133. Catalysis depends on Lys-161, which acts as the Schiff-base intermediate with substrate. Ile-203 lines the pyruvate pocket.

It belongs to the DapA family. As to quaternary structure, homotetramer; dimer of dimers.

Its subcellular location is the cytoplasm. It catalyses the reaction L-aspartate 4-semialdehyde + pyruvate = (2S,4S)-4-hydroxy-2,3,4,5-tetrahydrodipicolinate + H2O + H(+). Its pathway is amino-acid biosynthesis; L-lysine biosynthesis via DAP pathway; (S)-tetrahydrodipicolinate from L-aspartate: step 3/4. Catalyzes the condensation of (S)-aspartate-beta-semialdehyde [(S)-ASA] and pyruvate to 4-hydroxy-tetrahydrodipicolinate (HTPA). The chain is 4-hydroxy-tetrahydrodipicolinate synthase from Psychromonas ingrahamii (strain DSM 17664 / CCUG 51855 / 37).